The following is a 300-amino-acid chain: 3-methyl-2-oxobutanoate hydroxymethyltransferase (300 aa).

Mg(2+)-binding residues include Asp-75 and Asp-118. 3-methyl-2-oxobutanoate is bound by residues 75-76, Asp-118, and Lys-147; that span reads DS. Glu-149 contacts Mg(2+). Glu-216 functions as the Proton acceptor in the catalytic mechanism.

It belongs to the PanB family. Homodecamer; pentamer of dimers. It depends on Mg(2+) as a cofactor.

It is found in the cytoplasm. It catalyses the reaction 3-methyl-2-oxobutanoate + (6R)-5,10-methylene-5,6,7,8-tetrahydrofolate + H2O = 2-dehydropantoate + (6S)-5,6,7,8-tetrahydrofolate. Its pathway is cofactor biosynthesis; (R)-pantothenate biosynthesis; (R)-pantoate from 3-methyl-2-oxobutanoate: step 1/2. Functionally, catalyzes the reversible reaction in which hydroxymethyl group from 5,10-methylenetetrahydrofolate is transferred onto alpha-ketoisovalerate to form ketopantoate. This chain is 3-methyl-2-oxobutanoate hydroxymethyltransferase, found in Verminephrobacter eiseniae (strain EF01-2).